The chain runs to 155 residues: MALYEHVFLARQDISAQQVDALVEQYKGVIEANGGKVGRIENWGLKSLTYRIKKNRKAHYALMDIDAPAAAVQEMERQMRISEDVLRYMTIAVEKHEEGPSAMMQKRDRDDRPREGGRGPREGGFGDRDRGPRPPREGGFGDRDDRPRRPREDRV.

A disordered region spans residues 94–155 (EKHEEGPSAM…RPRRPREDRV (62 aa)).

This sequence belongs to the bacterial ribosomal protein bS6 family.

In terms of biological role, binds together with bS18 to 16S ribosomal RNA. The polypeptide is Small ribosomal subunit protein bS6 (Rhizobium johnstonii (strain DSM 114642 / LMG 32736 / 3841) (Rhizobium leguminosarum bv. viciae)).